The primary structure comprises 84 residues: NADH dehydrogenase [ubiquinone] 1 alpha subcomplex subunit 3 (84 aa).

Ala-2 bears the N-acetylalanine mark. The helical transmembrane segment at 19–39 (LVVSFSVWGLAIIMPMISPYT) threads the bilayer. Residues 59 to 84 (DDGNMPDVPSHPQDPLGPSLDWLKNL) are disordered.

The protein belongs to the complex I NDUFA3 subunit family. In terms of assembly, complex I is composed of 45 different subunits.

The protein resides in the mitochondrion inner membrane. Its function is as follows. Accessory subunit of the mitochondrial membrane respiratory chain NADH dehydrogenase (Complex I), that is believed not to be involved in catalysis. Complex I functions in the transfer of electrons from NADH to the respiratory chain. The immediate electron acceptor for the enzyme is believed to be ubiquinone. This chain is NADH dehydrogenase [ubiquinone] 1 alpha subcomplex subunit 3 (Ndufa3), found in Mus musculus (Mouse).